A 443-amino-acid polypeptide reads, in one-letter code: Exodeoxyribonuclease 7 large subunit (443 aa).

Belongs to the XseA family. As to quaternary structure, heterooligomer composed of large and small subunits.

Its subcellular location is the cytoplasm. It carries out the reaction Exonucleolytic cleavage in either 5'- to 3'- or 3'- to 5'-direction to yield nucleoside 5'-phosphates.. Functionally, bidirectionally degrades single-stranded DNA into large acid-insoluble oligonucleotides, which are then degraded further into small acid-soluble oligonucleotides. The protein is Exodeoxyribonuclease 7 large subunit of Stenotrophomonas maltophilia (strain R551-3).